The chain runs to 468 residues: 3-isopropylmalate dehydratase large subunit (468 aa).

[4Fe-4S] cluster contacts are provided by Cys-347, Cys-407, and Cys-410.

The protein belongs to the aconitase/IPM isomerase family. LeuC type 1 subfamily. As to quaternary structure, heterodimer of LeuC and LeuD. [4Fe-4S] cluster serves as cofactor.

The catalysed reaction is (2R,3S)-3-isopropylmalate = (2S)-2-isopropylmalate. The protein operates within amino-acid biosynthesis; L-leucine biosynthesis; L-leucine from 3-methyl-2-oxobutanoate: step 2/4. In terms of biological role, catalyzes the isomerization between 2-isopropylmalate and 3-isopropylmalate, via the formation of 2-isopropylmaleate. The sequence is that of 3-isopropylmalate dehydratase large subunit from Prochlorococcus marinus (strain AS9601).